The chain runs to 87 residues: Small ribosomal subunit protein uS15c (87 aa).

It belongs to the universal ribosomal protein uS15 family. Part of the 30S ribosomal subunit.

The protein localises to the plastid. The protein resides in the chloroplast. The sequence is that of Small ribosomal subunit protein uS15c (rps15) from Oenothera glazioviana (Large-flowered evening primrose).